We begin with the raw amino-acid sequence, 315 residues long: Replication factor C small subunit (315 aa).

Position 43 to 50 (43 to 50 (GSPGVGKT)) interacts with ATP.

Belongs to the activator 1 small subunits family. RfcS subfamily. As to quaternary structure, heteromultimer composed of small subunits (RfcS) and large subunits (RfcL).

In terms of biological role, part of the RFC clamp loader complex which loads the PCNA sliding clamp onto DNA. In Methanococcus maripaludis (strain DSM 14266 / JCM 13030 / NBRC 101832 / S2 / LL), this protein is Replication factor C small subunit.